We begin with the raw amino-acid sequence, 454 residues long: Photosystem II CP47 reaction center protein (454 aa).

6 helical membrane passes run Met-6–Ile-26, Ile-47–Trp-61, Gly-86–Phe-102, Ile-149–Ser-164, Val-183–Val-198, and Ser-403–Arg-418.

It belongs to the PsbB/PsbC family. PsbB subfamily. In terms of assembly, PSII is composed of 1 copy each of membrane proteins PsbA, PsbB, PsbC, PsbD, PsbE, PsbF, PsbH, PsbI, PsbJ, PsbK, PsbL, PsbM, PsbT, PsbX, PsbY, PsbZ, Psb30/Ycf12, at least 3 peripheral proteins of the oxygen-evolving complex and a large number of cofactors. It forms dimeric complexes. Binds multiple chlorophylls. PSII binds additional chlorophylls, carotenoids and specific lipids. serves as cofactor.

Its subcellular location is the plastid. It localises to the chloroplast thylakoid membrane. Its function is as follows. One of the components of the core complex of photosystem II (PSII). It binds chlorophyll and helps catalyze the primary light-induced photochemical processes of PSII. PSII is a light-driven water:plastoquinone oxidoreductase, using light energy to abstract electrons from H(2)O, generating O(2) and a proton gradient subsequently used for ATP formation. The chain is Photosystem II CP47 reaction center protein from Ostreococcus tauri.